Here is a 235-residue protein sequence, read N- to C-terminus: Cobalt transport protein CbiM (235 aa).

The first 33 residues, 1–33 (MRYLKFFLLLVFLVPSFGFSMHIMEGFLPPTHA), serve as a signal peptide directing secretion. Helical transmembrane passes span 34–51 (LIWY…LFTI), 63–83 (MLLA…IPSV), 95–115 (LGAI…VLLF), 118–138 (LLLA…MAIV), 156–176 (NIAV…TTSF), and 199–219 (IFAI…VVVI).

This sequence belongs to the CbiM family. As to quaternary structure, forms an energy-coupling factor (ECF) transporter complex composed of an ATP-binding protein (A component, CbiO), a transmembrane protein (T component, CbiQ) and 2 possible substrate-capture proteins (S components, CbiM and CbiN) of unknown stoichimetry.

It is found in the cell inner membrane. Its pathway is cofactor biosynthesis; adenosylcobalamin biosynthesis. Part of the energy-coupling factor (ECF) transporter complex CbiMNOQ involved in cobalt import. This Thermosipho melanesiensis (strain DSM 12029 / CIP 104789 / BI429) protein is Cobalt transport protein CbiM.